We begin with the raw amino-acid sequence, 190 residues long: Shikimate kinase (190 aa).

22-27 (GSGKST) contributes to the ATP binding site. Residue Ser-26 participates in Mg(2+) binding. Residues Asp-44, Arg-68, and Gly-90 each contribute to the substrate site. Position 127 (Arg-127) interacts with ATP. Arg-146 contributes to the substrate binding site.

This sequence belongs to the shikimate kinase family. As to quaternary structure, monomer. It depends on Mg(2+) as a cofactor.

It is found in the cytoplasm. The catalysed reaction is shikimate + ATP = 3-phosphoshikimate + ADP + H(+). Its pathway is metabolic intermediate biosynthesis; chorismate biosynthesis; chorismate from D-erythrose 4-phosphate and phosphoenolpyruvate: step 5/7. Functionally, catalyzes the specific phosphorylation of the 3-hydroxyl group of shikimic acid using ATP as a cosubstrate. The polypeptide is Shikimate kinase (Microcystis aeruginosa (strain NIES-843 / IAM M-2473)).